The sequence spans 383 residues: Probable L-aspartate decarboxylase (383 aa).

K231 is subject to N6-(pyridoxal phosphate)lysine.

The protein belongs to the group II decarboxylase family. MfnA subfamily. Pyridoxal 5'-phosphate serves as cofactor.

It catalyses the reaction L-aspartate + H(+) = beta-alanine + CO2. Its pathway is cofactor biosynthesis; coenzyme A biosynthesis. Its function is as follows. Catalyzes the decarboxylation of L-aspartate to produce beta-alanine. In Thermococcus gammatolerans (strain DSM 15229 / JCM 11827 / EJ3), this protein is Probable L-aspartate decarboxylase.